The following is a 154-amino-acid chain: 6,7-dimethyl-8-ribityllumazine synthase (154 aa).

5-amino-6-(D-ribitylamino)uracil-binding positions include F22, 56–58 (AFE), and 80–82 (AVI). Residue 85–86 (ET) coordinates (2S)-2-hydroxy-3-oxobutyl phosphate. Residue H88 is the Proton donor of the active site. F113 is a 5-amino-6-(D-ribitylamino)uracil binding site. R127 serves as a coordination point for (2S)-2-hydroxy-3-oxobutyl phosphate.

The protein belongs to the DMRL synthase family.

The enzyme catalyses (2S)-2-hydroxy-3-oxobutyl phosphate + 5-amino-6-(D-ribitylamino)uracil = 6,7-dimethyl-8-(1-D-ribityl)lumazine + phosphate + 2 H2O + H(+). It functions in the pathway cofactor biosynthesis; riboflavin biosynthesis; riboflavin from 2-hydroxy-3-oxobutyl phosphate and 5-amino-6-(D-ribitylamino)uracil: step 1/2. Catalyzes the formation of 6,7-dimethyl-8-ribityllumazine by condensation of 5-amino-6-(D-ribitylamino)uracil with 3,4-dihydroxy-2-butanone 4-phosphate. This is the penultimate step in the biosynthesis of riboflavin. This chain is 6,7-dimethyl-8-ribityllumazine synthase, found in Thermoanaerobacter sp. (strain X514).